The sequence spans 222 residues: N-acetyltransferase 8 (222 aa).

Residues 1–35 (MASFHIRQFQERDYEQVVDMFSRGMKEHIPTAFRH) lie on the Cytoplasmic side of the membrane. Residues 36–56 (LLLLPRTLLLLLGVPLALVLV) traverse the membrane as a helical; Signal-anchor for type II membrane protein segment. Topologically, residues 57-222 (SGSWLLAVVC…IHFIYPLPSS (166 aa)) are lumenal. Positions 62–217 (LAVVCIFFLL…VDVSLIHFIY (156 aa)) constitute an N-acetyltransferase domain.

It belongs to the NAT8 family.

Its subcellular location is the endoplasmic reticulum-Golgi intermediate compartment membrane. It localises to the endoplasmic reticulum membrane. The enzyme catalyses L-lysyl-[protein] + acetyl-CoA = N(6)-acetyl-L-lysyl-[protein] + CoA + H(+). It catalyses the reaction an S-substituted L-cysteine + acetyl-CoA = an N-acetyl-L-cysteine-S-conjugate + CoA + H(+). It functions in the pathway sulfur metabolism; glutathione metabolism. Endoplasmic reticulum-membrane(ER)-bound lysine N-acetyltransferase catalyzing the N6-acetylation of lysine residues in the lumen of the ER in various proteins, including PROM1 and BACE1, using acetyl-CoA as acetyl donor. Thereby, may regulate apoptosis through the acetylation and the regulation of the expression of PROM1. May also regulate amyloid beta-peptide secretion through acetylation of BACE1 and the regulation of its expression in neurons. N(6)-lysine acetylation in the ER maintains protein homeostasis and regulates reticulophagy. Alternatively, acetylates the free alpha-amino group of cysteine S-conjugates to form mercapturic acids. This is the final step in a major route for detoxification of a wide variety of reactive electrophiles which starts with their incorporation into glutathione S-conjugates. The glutathione S-conjugates are then further processed into cysteine S-conjugates and finally mercapturic acids which are water soluble and can be readily excreted in urine or bile. The chain is N-acetyltransferase 8 (Nat8) from Rattus norvegicus (Rat).